A 185-amino-acid polypeptide reads, in one-letter code: Elongation factor P (185 aa).

It belongs to the elongation factor P family.

The protein localises to the cytoplasm. The protein operates within protein biosynthesis; polypeptide chain elongation. In terms of biological role, involved in peptide bond synthesis. Stimulates efficient translation and peptide-bond synthesis on native or reconstituted 70S ribosomes in vitro. Probably functions indirectly by altering the affinity of the ribosome for aminoacyl-tRNA, thus increasing their reactivity as acceptors for peptidyl transferase. This is Elongation factor P from Bacillus cereus (strain G9842).